Consider the following 198-residue polypeptide: Ribonuclease HII (198 aa).

The RNase H type-2 domain maps to 10 to 198 (QLVAGVDEVG…PVKRALGLAS (189 aa)). A divalent metal cation contacts are provided by aspartate 16, glutamate 17, and aspartate 108.

This sequence belongs to the RNase HII family. Mn(2+) is required as a cofactor. Requires Mg(2+) as cofactor.

Its subcellular location is the cytoplasm. The catalysed reaction is Endonucleolytic cleavage to 5'-phosphomonoester.. Functionally, endonuclease that specifically degrades the RNA of RNA-DNA hybrids. The polypeptide is Ribonuclease HII (Shigella boydii serotype 18 (strain CDC 3083-94 / BS512)).